We begin with the raw amino-acid sequence, 1242 residues long: MAPATPKTSKTAHFENGSTSSQKKMKQSSLLSFFSKQVPSGTPSKKVQKPTPATLENTATDKITKNPQGGKTGKLFVDVDEDNDLTIAEETVSTVRSDIMHSQEPQSDTMLNSNTTEPKSTTTDEDLSSSQSRRNHKRRVNYAESDDDDSDTTFTAKRKKGKVVDSESDEDEYLPDKNDGDEDDDIADDKEDIKGELAEDSGDDDDLISLAETTSKKKFSYNTSHSSSPFTRNISRDNSKKKSRPNQAPSRSYNPSHSQPSATSKSSKFNKQNEERYQWLVDERDAQRRPKSDPEYDPRTLYIPSSAWNKFTPFEKQYWEIKSKMWDCIVFFKKGKFFELYEKDALLANALFDLKIAGGGRANMQLAGIPEMSFEYWAAQFIQMGYKVAKVDQRESMLAKEMREGSKGIVKRELQCILTSGTLTDGDMLHSDLATFCLAIREEPGNFYNETQLDSSTIVQKLNTKIFGAAFIDTATGELQMLEFEDDSECTKLDTLMSQVRPMEVVMERNNLSTLANKIVKFNSAPNAIFNEVKAGEEFYDCDKTYAEIISSEYFSTEEDWPEVLKSYYDTGKKVGFSAFGGLLYYLKWLKLDKNLISMKNIKEYDFVKSQHSMVLDGITLQNLEIFSNSFDGSDKGTLFKLFNRAITPMGKRMMKKWLMHPLLRKNDIESRLDSVDSLLQDITLREQLEITFSKLPDLERMLARIHSRTIKVKDFEKVITAFETIIELQDSLKNNDLKGDVSKYISSFPEGLVEAVKSWTNAFERQKAINENIIVPQRGFDIEFDKSMDRIQELEDELMEILMTYRKQFKCSNIQYKDSGKEIYTIEIPISATKNVPSNWVQMAANKTYKRYYSDEVRALARSMAEAKEIHKTLEEDLKNRLCQKFDAHYNTIWMPTIQAISNIDCLLAITRTSEYLGAPSCRPTIVDEVDSKTNTQLNGFLKFKSLRHPCFNLGATTAKDFIPNDIELGKEQPRLGLLTGANAAGKSTILRMACIAVIMAQMGCYVPCESAVLTPIDRIMTRLGANDNIMQGKSTFFVELAETKKILDMATNRSLLVVDELGRGGSSSDGFAIAESVLHHVATHIQSLGFFATHYGTLASSFKHHPQVRPLKMSILVDEATRNVTFLYKMLEGQSEGSFGMHVASMCGISKEIIDNAQIAADNLEHTSRLVKERDLAANNLNGEVVSVPGGLQSDFVRIAYGDGLKNTKLGSGEGVLNYDWNIKRNVLKSLFSIIDDLQS.

A compositionally biased stretch (polar residues) spans 1 to 11 (MAPATPKTSKT). Positions 1–271 (MAPATPKTSK…ATSKSSKFNK (271 aa)) are disordered. Positions 18–37 (STSSQKKMKQSSLLSFFSKQ) are enriched in low complexity. A PIP box motif is present at residues 27–34 (QSSLLSFF). Over residues 54–69 (TLENTATDKITKNPQG) the composition is skewed to polar residues. The residue at position 102 (Ser102) is a Phosphoserine. Residues 103-121 (QEPQSDTMLNSNTTEPKST) are compositionally biased toward polar residues. A phosphoserine mark is found at Ser145 and Ser150. 2 stretches are compositionally biased toward acidic residues: residues 166-190 (SESD…ADDK) and 198-207 (AEDSGDDDDL). The residue at position 201 (Ser201) is a Phosphoserine. Composition is skewed to polar residues over residues 220 to 233 (SYNT…FTRN) and 245 to 270 (PNQA…SKFN). Residues 228–299 (SPFTRNISRD…PKSDPEYDPR (72 aa)) mediate DNA binding. The tract at residues 305-421 (SSAWNKFTPF…RELQCILTSG (117 aa)) is mispair-binding domain. Thr451 carries the post-translational modification Phosphothreonine. Residue 982 to 989 (GANAAGKS) coordinates ATP.

It belongs to the DNA mismatch repair MutS family. Heterodimer consisting of MSH2-MSH6 (MutS alpha). Forms a ternary complex with MutL alpha (MLH1-PMS1). MutS alpha interacts with proliferating cell nuclear antigen (PCNA/POL30). This interaction is disrupted upon binding of MutS alpha to mismatch DNA.

The protein resides in the nucleus. Its activity is regulated as follows. Inhibited by Cd(2+). Its function is as follows. Component of the post-replicative DNA mismatch repair system (MMR). Heterodimerizes with MSH2 to form MutS alpha, which binds to DNA mismatches thereby initiating DNA repair. MSH6 provides substrate-binding and substrate specificity to the complex. When bound, MutS alpha bends the DNA helix and shields approximately 20 base pairs. Acts mainly to repair base-base and single insertion-deletion mismatches that occur during replication, but can also repair longer insertion-deletion loops (IDLs), although with decreasing efficiency as the size of the extrahelical loop increases. After mismatch binding, forms a ternary complex with the MutL alpha heterodimer, which is thought to be responsible for directing the downstream MMR events, including strand discrimination, excision, and resynthesis. ATP binding and hydrolysis by the MutS alpha complex is crucial for MMR. Both subunits bind ATP, but with differing affinities, and their ATPase kinetics are also very different. MSH6 binds and hydrolyzes ATP rapidly, whereas MSH2 catalyzes ATP at a substantially slower rate. Binding to a mismatched base pair suppresses MSH6-catalyzed ATP hydrolysis, but not the activity of MSH2. ATP binding to both subunits is necessary to trigger a change in MutS alpha interaction with mismatched DNA, converting MutS alpha into a sliding clamp capable of hydrolysis-independent movement along DNA, and also facilitates formation of ternary complexes containing MutS and MutL proteins and the mismatch. May also be involved in resolution of recombination intermediates. The chain is DNA mismatch repair protein MSH6 (MSH6) from Saccharomyces cerevisiae (strain ATCC 204508 / S288c) (Baker's yeast).